The primary structure comprises 199 residues: Protein GrpE (199 aa).

A compositionally biased stretch (polar residues) spans 1-17 (MSDSDNNTKSQQNNPTQ). A disordered region spans residues 1–36 (MSDSDNNTKSQQNNPTQTDEKSGEEIQSNQKPQRKF).

It belongs to the GrpE family. In terms of assembly, homodimer.

It localises to the cytoplasm. In terms of biological role, participates actively in the response to hyperosmotic and heat shock by preventing the aggregation of stress-denatured proteins, in association with DnaK and GrpE. It is the nucleotide exchange factor for DnaK and may function as a thermosensor. Unfolded proteins bind initially to DnaJ; upon interaction with the DnaJ-bound protein, DnaK hydrolyzes its bound ATP, resulting in the formation of a stable complex. GrpE releases ADP from DnaK; ATP binding to DnaK triggers the release of the substrate protein, thus completing the reaction cycle. Several rounds of ATP-dependent interactions between DnaJ, DnaK and GrpE are required for fully efficient folding. The protein is Protein GrpE of Ehrlichia canis (strain Jake).